A 276-amino-acid chain; its full sequence is Ribonuclease 3 (276 aa).

The interval 1–29 (MRGTVSVPKKAEDAKADPPAKKKADTQAS) is disordered. Residues 9–25 (KKAEDAKADPPAKKKAD) are compositionally biased toward basic and acidic residues. Residues 31–157 (HTLLEGRLGY…VIGAVYLDQG (127 aa)) form the RNase III domain. Glu70 contributes to the Mg(2+) binding site. The active site involves Asp74. Positions 143 and 146 each coordinate Mg(2+). Glu146 is an active-site residue. The 69-residue stretch at 184–252 (DWKTSLQELT…AESAWRSIRA (69 aa)) folds into the DRBM domain. The interval 227-276 (YGTGTGRSKKEAEQQAAESAWRSIRAAADERAKATADAVDADPDEASASA) is disordered. The segment covering 265–276 (VDADPDEASASA) has biased composition (acidic residues).

Belongs to the ribonuclease III family. In terms of assembly, homodimer. It depends on Mg(2+) as a cofactor.

Its subcellular location is the cytoplasm. The enzyme catalyses Endonucleolytic cleavage to 5'-phosphomonoester.. Its function is as follows. Digests double-stranded RNA. Involved in the processing of primary rRNA transcript to yield the immediate precursors to the large and small rRNAs (23S and 16S). Also processes some mRNAs, and tRNAs when they are encoded in the rRNA operon. May modulate key aspects of gene expression as its absence has extensive effects on the abundance of about 200 different transcripts. Probably processes pre-crRNA and tracrRNA of type II CRISPR loci if present in the organism. This Streptomyces coelicolor (strain ATCC BAA-471 / A3(2) / M145) protein is Ribonuclease 3 (rnc).